Consider the following 430-residue polypeptide: Crotonyl-CoA carboxylase/reductase (430 aa).

This sequence belongs to the zinc-containing alcohol dehydrogenase family. Crotonyl-CoA carboxylase/reductase subfamily. Homodimer. Requires Despite some sequence similarity to zinc-containing alcohol dehydrogenases, this enzyme does not bind any metals. as cofactor.

The catalysed reaction is (2S)-ethylmalonyl-CoA + NADP(+) = (2E)-butenoyl-CoA + CO2 + NADPH. It carries out the reaction (S)-methylmalonyl-CoA + NADP(+) = acryloyl-CoA + CO2 + NADPH. It catalyses the reaction butanoyl-CoA + NADP(+) = (2E)-butenoyl-CoA + NADPH + H(+). Functionally, catalyzes the NADPH-dependent reductive carboxylation of crotonyl-CoA ((2E)-butenoyl-CoA) to (2S)-ethylmalonyl-CoA, in the presence of CO2. This is a key reaction in the ethylmalonyl-CoA pathway for acetyl-CoA assimilation required for R.sphaeroides growth on acetate as sole carbon source. Is also able to accept acryloyl-CoA as an alternative substrate, yielding (2S)-methylmalonyl-CoA. To a lesser extent, when CO2 is absent, the enzyme also catalyzes the reduction of crotonyl-CoA to butanoyl-CoA. The polypeptide is Crotonyl-CoA carboxylase/reductase (Cereibacter sphaeroides (strain ATCC 17023 / DSM 158 / JCM 6121 / CCUG 31486 / LMG 2827 / NBRC 12203 / NCIMB 8253 / ATH 2.4.1.) (Rhodobacter sphaeroides)).